A 102-amino-acid chain; its full sequence is Large ribosomal subunit protein bL21 (102 aa).

The protein belongs to the bacterial ribosomal protein bL21 family. As to quaternary structure, part of the 50S ribosomal subunit. Contacts protein L20.

This protein binds to 23S rRNA in the presence of protein L20. The chain is Large ribosomal subunit protein bL21 from Azorhizobium caulinodans (strain ATCC 43989 / DSM 5975 / JCM 20966 / LMG 6465 / NBRC 14845 / NCIMB 13405 / ORS 571).